Here is a 389-residue protein sequence, read N- to C-terminus: Phospho-N-acetylmuramoyl-pentapeptide-transferase (389 aa).

10 consecutive transmembrane segments (helical) span residues 25–45, 73–93, 97–117, 135–155, 190–210, 222–242, 258–278, 286–306, 311–331, and 366–386; these read RAVMATITALVIGLVCGPWVI, TMGGVLILIGIAVATLLWGDL, FIWIVMLVTFGFGVIGWVDDY, FWQSVIGLFAAVYLAFSVSEA, ISYPLGVWGFIALTYFVIVGA, GLVIMPVVLVGASLGVFAYVM, GAGELLIFCSAMGGAGLAFLW, VFMGDVGALALGGALGTVAVI, IVLFIMGGIFVAETLSVMLQV, and QVVVRFWIITLMLCLFGLSTL.

Belongs to the glycosyltransferase 4 family. MraY subfamily. Requires Mg(2+) as cofactor.

It localises to the cell inner membrane. The catalysed reaction is UDP-N-acetyl-alpha-D-muramoyl-L-alanyl-gamma-D-glutamyl-meso-2,6-diaminopimeloyl-D-alanyl-D-alanine + di-trans,octa-cis-undecaprenyl phosphate = di-trans,octa-cis-undecaprenyl diphospho-N-acetyl-alpha-D-muramoyl-L-alanyl-D-glutamyl-meso-2,6-diaminopimeloyl-D-alanyl-D-alanine + UMP. It functions in the pathway cell wall biogenesis; peptidoglycan biosynthesis. In terms of biological role, catalyzes the initial step of the lipid cycle reactions in the biosynthesis of the cell wall peptidoglycan: transfers peptidoglycan precursor phospho-MurNAc-pentapeptide from UDP-MurNAc-pentapeptide onto the lipid carrier undecaprenyl phosphate, yielding undecaprenyl-pyrophosphoryl-MurNAc-pentapeptide, known as lipid I. The chain is Phospho-N-acetylmuramoyl-pentapeptide-transferase from Burkholderia mallei (strain NCTC 10247).